A 132-amino-acid chain; its full sequence is 3-aminoacrylate deaminase RutC (132 aa).

Belongs to the RutC family.

The catalysed reaction is (Z)-3-aminoacrylate + H2O + H(+) = 3-oxopropanoate + NH4(+). In terms of biological role, involved in pyrimidine catabolism. Catalyzes the deamination of 3-aminoacrylate to malonic semialdehyde, a reaction that can also occur spontaneously. RutC may facilitate the reaction and modulate the metabolic fitness, rather than catalyzing essential functions. The protein is 3-aminoacrylate deaminase RutC of Cronobacter turicensis (strain DSM 18703 / CCUG 55852 / LMG 23827 / z3032).